Here is a 520-residue protein sequence, read N- to C-terminus: Ribonuclease Y (520 aa).

A helical transmembrane segment spans residues 3-23 (IEIQWIGIGAAFLVGAIGGAL). The KH domain occupies 210-273 (AVSVVPLPND…EVARLALERL (64 aa)). The 94-residue stretch at 336-429 (VLQHSIEVAF…VQAADALSGA (94 aa)) folds into the HD domain.

The protein belongs to the RNase Y family.

It is found in the cell membrane. Endoribonuclease that initiates mRNA decay. This chain is Ribonuclease Y, found in Syntrophotalea carbinolica (strain DSM 2380 / NBRC 103641 / GraBd1) (Pelobacter carbinolicus).